A 689-amino-acid polypeptide reads, in one-letter code: 7SK snRNA methylphosphate capping enzyme (689 aa).

The residue at position 1 (methionine 1) is an N-acetylmethionine. Basic and acidic residues predominate over residues 1 to 10; that stretch reads MIEMAAEKEP. The interval 1 to 167 is disordered; sequence MIEMAAEKEP…GGGGFKHPAF (167 aa). Low complexity predominate over residues 52-84; sequence GRCAPSAGSPAAAVGRESPGAAATSSSGPQAQQ. Residues serine 57, serine 60, serine 69, and serine 101 each carry the phosphoserine modification. Arginine 117 is modified (omega-N-methylarginine). Phosphoserine occurs at positions 152, 175, and 179. At threonine 213 the chain carries Phosphothreonine. Residues serine 216, serine 217, and serine 254 each carry the phosphoserine modification. The segment covering 258–269 has biased composition (basic residues); sequence TGRKRHRHRGQH. The segment at 258–314 is disordered; it reads TGRKRHRHRGQHHQQQQAAGGSESHPVPPTAPLTPLLHGEGASQQPRHRGQNRDAPQ. Threonine 291 carries the post-translational modification Phosphothreonine. 2 positions are modified to phosphoserine: serine 330 and serine 344. Positions 332–407 are disordered; sequence LPSALQGPSG…HHPLPAAGFK (76 aa). The span at 338-359 shows a compositional bias: low complexity; sequence GPSGSLSAPPAASVISAPPSSS. A compositionally biased stretch (basic residues) spans 360–369; the sequence is SRHRKRRRTS. Phosphoserine is present on serine 390. Residues tyrosine 422, arginine 433, 451-453, 474-475, 559-560, and leucine 581 each bind S-adenosyl-L-methionine; these read GCN, DI, and NY. The Bin3-type SAM domain maps to 431–686; that stretch reads DGRLRVLKPE…PVYLFHKARS (256 aa). Lysine 643 participates in a covalent cross-link: Glycyl lysine isopeptide (Lys-Gly) (interchain with G-Cter in SUMO2).

The protein belongs to the methyltransferase superfamily. Core component of the 7SK RNP complex, at least composed of 7SK RNA, LARP7, MEPCE, HEXIM1 (or HEXIM2) and P-TEFb (composed of CDK9 and CCNT1/cyclin-T1). Interacts with METTL16. Interacts with RBM7; upon genotoxic stress this interaction is enhanced, triggering the release of inactive P-TEFb complex from the core, yielding to P-TEFb complex activation. Dephosphorylated at Ser-152 by the PNUTS-PP1 complex, promoting RNA polymerase II transcription pause-release. As to expression, expressed in chronic myeloid leukemia cells, adrenal gland, brain, cerebellum, kidney, lung, mammary gland and testis. Weakly or not expressed in other tissues.

It is found in the nucleus. It catalyses the reaction a 5'-end triphospho-guanosine-ribonucleotide-snRNA + S-adenosyl-L-methionine = a 5'-end methyltriphosphate-guanosine-ribonucleotide-snRNA + S-adenosyl-L-homocysteine. S-adenosyl-L-methionine-dependent methyltransferase that adds a methylphosphate cap at the 5'-end of 7SK snRNA (7SK RNA), leading to stabilize it. Also has a non-enzymatic function as part of the 7SK RNP complex: the 7SK RNP complex sequesters the positive transcription elongation factor b (P-TEFb) in a large inactive 7SK RNP complex preventing RNA polymerase II phosphorylation and subsequent transcriptional elongation. The 7SK RNP complex also promotes snRNA gene transcription by RNA polymerase II via interaction with the little elongation complex (LEC). In the 7SK RNP complex, MEPCE is required to stabilize 7SK RNA and facilitate the assembly of 7SK RNP complex. MEPCE has a non-enzymatic function in the 7SK RNP complex; interaction with LARP7 within the 7SK RNP complex occluding its catalytic center. Also required for stability of U6 snRNAs. This chain is 7SK snRNA methylphosphate capping enzyme, found in Homo sapiens (Human).